Consider the following 461-residue polypeptide: MAQTLTEFDTIAAISTPIGEGGISIVRMSGEDAVKIANEVFKGADLTKVPTHTIHYGHIVDPDTDKTIDESMVTVLRAPKTFTREDIVEINCHGGIVVTNHILQLLLSHGARMADPGEFTKRAFVNGRIDLTQAESVMDIVRAKTDKARQVAVGQLAGGLLHKIQAMRQEILDTLANVEVNIDYPEYDADTVTAKQMADTAKSVIKKIDRLLKTAQEGKILRNGLATAIVGRPNVGKSSLLNYLTQSDKAIVTDVAGTTRDTLEEYVSVKGVPLELIDTAGIHHTDDKVEKIGVERSKKALDRADLVLLLIDASQELTAEDKALIEETKDKKRIIVLNKSDLGQKITVDEMKKQTGSDVILTSILKEKNLDKLEELINKLFFAGIENSNDQVMVTNQRQTSLLTKAKKELQDVVQAVEDGIPIDIAQIDFTGAWDTLGEITGESAPDELVTQLFSQFCLGK.

(6S)-5-formyl-5,6,7,8-tetrahydrofolate is bound by residues arginine 27, glutamate 89, and arginine 128. The TrmE-type G domain maps to 224–382 (GLATAIVGRP…LEELINKLFF (159 aa)). Asparagine 234 serves as a coordination point for K(+). Residues 234–239 (NVGKSS), 253–259 (TDVAGTT), and 278–281 (DTAG) contribute to the GTP site. Serine 238 is a binding site for Mg(2+). 3 residues coordinate K(+): threonine 253, valine 255, and threonine 258. Threonine 259 is a Mg(2+) binding site. Lysine 461 lines the (6S)-5-formyl-5,6,7,8-tetrahydrofolate pocket.

Belongs to the TRAFAC class TrmE-Era-EngA-EngB-Septin-like GTPase superfamily. TrmE GTPase family. As to quaternary structure, homodimer. Heterotetramer of two MnmE and two MnmG subunits. K(+) serves as cofactor.

It is found in the cytoplasm. In terms of biological role, exhibits a very high intrinsic GTPase hydrolysis rate. Involved in the addition of a carboxymethylaminomethyl (cmnm) group at the wobble position (U34) of certain tRNAs, forming tRNA-cmnm(5)s(2)U34. This Lactobacillus helveticus (strain DPC 4571) protein is tRNA modification GTPase MnmE.